Consider the following 107-residue polypeptide: Nucleoid-associated protein HNE_0371 (107 aa).

Belongs to the YbaB/EbfC family. As to quaternary structure, homodimer.

The protein localises to the cytoplasm. The protein resides in the nucleoid. Binds to DNA and alters its conformation. May be involved in regulation of gene expression, nucleoid organization and DNA protection. The chain is Nucleoid-associated protein HNE_0371 from Hyphomonas neptunium (strain ATCC 15444).